A 263-amino-acid chain; its full sequence is UPF0328 protein ECU08_2060 (263 aa).

The protein belongs to the UPF0328 family.

The protein is UPF0328 protein ECU08_2060 of Encephalitozoon cuniculi (strain GB-M1) (Microsporidian parasite).